The chain runs to 205 residues: Protease (205 aa).

Active-site residues include histidine 54, aspartate 71, and cysteine 122.

The protein belongs to the peptidase C5 family. As to quaternary structure, interacts with protease cofactor pVI-C; this interaction is necessary for protease activation.

The protein localises to the virion. The protein resides in the host nucleus. The catalysed reaction is Cleaves proteins of the adenovirus and its host cell at two consensus sites: -Yaa-Xaa-Gly-Gly-|-Xaa- and -Yaa-Xaa-Gly-Xaa-|-Gly- (in which Yaa is Met, Ile or Leu, and Xaa is any amino acid).. Requires DNA and protease cofactor for maximal activation. Inside nascent virions, becomes partially activated by binding to the viral DNA, allowing it to cleave the cofactor that binds to the protease and fully activates it. Actin, like the viral protease cofactor, seems to act as a cofactor in the cleavage of cytokeratin 18 and of actin itself. Cleaves viral precursor proteins (pTP, pIIIa, pVI, pVII, pVIII, and pX) inside newly assembled particles giving rise to mature virions. Protease complexed to its cofactor slides along the viral DNA to specifically locate and cleave the viral precursors. Mature virions have a weakened organization compared to the unmature virions, thereby facilitating subsequent uncoating. Without maturation, the particle lacks infectivity and is unable to uncoat. Late in adenovirus infection, in the cytoplasm, may participate in the cytoskeleton destruction. Cleaves host cell cytoskeletal keratins K7 and K18. This chain is Protease, found in Homo sapiens (Human).